Here is a 166-residue protein sequence, read N- to C-terminus: Phosphopantetheine adenylyltransferase (166 aa).

Ser-9 contacts substrate. Residues Ser-9–Phe-10 and His-17 each bind ATP. Residues Lys-41, Thr-74, and Arg-88 each coordinate substrate. Residues Gly-89 to Arg-91, Glu-99, and Asp-124 to Ser-130 contribute to the ATP site.

This sequence belongs to the bacterial CoaD family. In terms of assembly, homohexamer. It depends on Mg(2+) as a cofactor.

It localises to the cytoplasm. It carries out the reaction (R)-4'-phosphopantetheine + ATP + H(+) = 3'-dephospho-CoA + diphosphate. It participates in cofactor biosynthesis; coenzyme A biosynthesis; CoA from (R)-pantothenate: step 4/5. Its function is as follows. Reversibly transfers an adenylyl group from ATP to 4'-phosphopantetheine, yielding dephospho-CoA (dPCoA) and pyrophosphate. This is Phosphopantetheine adenylyltransferase from Lactobacillus johnsonii (strain CNCM I-12250 / La1 / NCC 533).